The primary structure comprises 50 residues: Sperm protamine P1 (50 aa).

2 cysteine pairs are disulfide-bonded: Cys7/Cys15 and Cys38/Cys46.

It belongs to the protamine P1 family. In terms of assembly, cross-linked by interchain disulfide bonds around the DNA-helix. Testis.

It is found in the nucleus. It localises to the chromosome. Protamines substitute for histones in the chromatin of sperm during the haploid phase of spermatogenesis. They compact sperm DNA into a highly condensed, stable and inactive complex. The protein is Sperm protamine P1 (PRM1) of Equus asinus (Donkey).